The chain runs to 338 residues: Probable G-protein coupled receptor 160 (338 aa).

At 1–23 (MTALSSENCSFQYQLRQTNQPLD) the chain is on the extracellular side. N-linked (GlcNAc...) asparagine glycosylation occurs at asparagine 8. A helical membrane pass occupies residues 24–44 (VNYLLFLIILGKILLNILTLG). The Cytoplasmic segment spans residues 45 to 58 (MRRKNTCQNFMEYF). A helical membrane pass occupies residues 59–79 (CISLAFVDLLLLVNISIILYF). At 80–93 (RDFVLLSIRFTKYH) the chain is on the extracellular side. A helical membrane pass occupies residues 94–114 (ICLFTQIISFTYGFLHYPVFL). At 115–136 (TACIDYCLNFSKTTKLSFKCQK) the chain is on the cytoplasmic side. Residues 137-157 (LFYFFTVILIWISVLAYVLGD) traverse the membrane as a helical segment. At 158–177 (PAIYQSLKAQNAYSRHCPFY) the chain is on the extracellular side. Residues 178 to 198 (VSIQSYWLSFFMVMILFVAFI) traverse the membrane as a helical segment. Topologically, residues 199–244 (TCWEEVTTLVQAIRITSYMNETILYFPFSSHSSYTVRSKKIFLSKL) are cytoplasmic. A helical membrane pass occupies residues 245-265 (IVCFLSTWLPFVLLQVIIVLL). The Extracellular segment spans residues 266-268 (KVQ). A helical membrane pass occupies residues 269 to 289 (IPAYIEMNIPWLYFVNSFLIA). Over 290–338 (TVYWFNCHKLNLKDIGLPLDPFVNWKCCFIPLTIPNLEQIEKPISIMIC) the chain is Cytoplasmic.

Belongs to the G-protein coupled receptor 1 family.

Its subcellular location is the cell membrane. Its function is as follows. Orphan receptor. This Homo sapiens (Human) protein is Probable G-protein coupled receptor 160 (GPR160).